The chain runs to 114 residues: T cell receptor beta variable 5-4 (114 aa).

The first 21 residues, 1-21, serve as a signal peptide directing secretion; that stretch reads MGPGLLCWALLCLLGAGSVET. The 93-residue stretch at 22–114 folds into the Ig-like domain; the sequence is GVTQSPTHLI…SALYLCASSL (93 aa). Cysteine 42 and cysteine 110 are joined by a disulfide. Asparagine 90 carries an N-linked (GlcNAc...) asparagine glycan.

As to quaternary structure, alpha-beta TR is a heterodimer composed of an alpha and beta chain; disulfide-linked. The alpha-beta TR is associated with the transmembrane signaling CD3 coreceptor proteins to form the TR-CD3 (TcR or TCR). The assembly of alpha-beta TR heterodimers with CD3 occurs in the endoplasmic reticulum where a single alpha-beta TR heterodimer associates with one CD3D-CD3E heterodimer, one CD3G-CD3E heterodimer and one CD247 homodimer forming a stable octameric structure. CD3D-CD3E and CD3G-CD3E heterodimers preferentially associate with TR alpha and TR beta chains, respectively. The association of the CD247 homodimer is the last step of TcR assembly in the endoplasmic reticulum and is required for transport to the cell surface.

Its subcellular location is the cell membrane. Functionally, v region of the variable domain of T cell receptor (TR) beta chain that participates in the antigen recognition. Alpha-beta T cell receptors are antigen specific receptors which are essential to the immune response and are present on the cell surface of T lymphocytes. Recognize peptide-major histocompatibility (MH) (pMH) complexes that are displayed by antigen presenting cells (APC), a prerequisite for efficient T cell adaptive immunity against pathogens. Binding of alpha-beta TR to pMH complex initiates TR-CD3 clustering on the cell surface and intracellular activation of LCK that phosphorylates the ITAM motifs of CD3G, CD3D, CD3E and CD247 enabling the recruitment of ZAP70. In turn ZAP70 phosphorylates LAT, which recruits numerous signaling molecules to form the LAT signalosome. The LAT signalosome propagates signal branching to three major signaling pathways, the calcium, the mitogen-activated protein kinase (MAPK) kinase and the nuclear factor NF-kappa-B (NF-kB) pathways, leading to the mobilization of transcription factors that are critical for gene expression and essential for T cell growth and differentiation. The T cell repertoire is generated in the thymus, by V-(D)-J rearrangement. This repertoire is then shaped by intrathymic selection events to generate a peripheral T cell pool of self-MH restricted, non-autoaggressive T cells. Post-thymic interaction of alpha-beta TR with the pMH complexes shapes TR structural and functional avidity. The polypeptide is T cell receptor beta variable 5-4 (Homo sapiens (Human)).